Here is an 80-residue protein sequence, read N- to C-terminus: Late expression factor 10 (80 aa).

This sequence belongs to the baculoviridae LEF-10 family.

Involved in late/very late gene activation. The protein is Late expression factor 10 (LEF-10) of Orgyia pseudotsugata multicapsid polyhedrosis virus (OpMNPV).